The following is a 397-amino-acid chain: Probable N-succinyldiaminopimelate aminotransferase DapC (397 aa).

Residues 109–110 (GS) and 218–222 (DGMAE) contribute to the pyridoxal 5'-phosphate site. Residue Lys232 is modified to N6-(pyridoxal phosphate)lysine.

This sequence belongs to the class-III pyridoxal-phosphate-dependent aminotransferase family. In terms of assembly, homodimer. The cofactor is pyridoxal 5'-phosphate.

It is found in the cytoplasm. It carries out the reaction N-succinyl-(2S,6S)-2,6-diaminopimelate + 2-oxoglutarate = (S)-2-succinylamino-6-oxoheptanedioate + L-glutamate. Its pathway is amino-acid biosynthesis; L-lysine biosynthesis via DAP pathway; LL-2,6-diaminopimelate from (S)-tetrahydrodipicolinate (succinylase route): step 2/3. Functionally, involved in the lysine biosynthetic pathways. It catalyzes the transfer of an amino group from L-glutamate to N-succinyl-2-l-amino-6-oxoheptanedioate (N-succinyl-2-l-amino-6-ketopimelate) in a PLP-dependent reaction, yielding as products N-succinyl-l-2,6-diaminoheptanedioate (N-succinyl-diaminopimelate) and 2-oxoglutarate. In Mycobacterium tuberculosis (strain CDC 1551 / Oshkosh), this protein is Probable N-succinyldiaminopimelate aminotransferase DapC (dapC).